A 25-amino-acid chain; its full sequence is Putative cytochrome c4 (25 aa).

Positions 1-25 (QEDIEAGKQKSATCTACHGQEGNST) are disordered. Heme-binding residues include cysteine 14 and cysteine 17.

In terms of processing, binds 2 heme groups per subunit.

Its subcellular location is the periplasm. Diheme, high potential cytochrome c believed to be an intermediate electron donor to terminal oxidation systems. In Aliivibrio fischeri (Vibrio fischeri), this protein is Putative cytochrome c4.